The following is a 50-amino-acid chain: Large ribosomal subunit protein bL36B (50 aa).

Belongs to the bacterial ribosomal protein bL36 family.

This Pseudomonas aeruginosa (strain UCBPP-PA14) protein is Large ribosomal subunit protein bL36B.